The primary structure comprises 323 residues: Synaptonemal complex central element protein 1 (323 aa).

The segment covering 1-10 (MAGRPGSSNA) has biased composition (polar residues). Disordered regions lie at residues 1–31 (MAGR…SSQK) and 294–323 (KQEE…PSTK). 2 stretches are compositionally biased toward basic and acidic residues: residues 20 to 31 (DEARGQAESSQK) and 313 to 323 (SEEKDQEPSTK). Residues 25–290 (QAESSQKIED…EKLGVQVLAQ (266 aa)) adopt a coiled-coil conformation.

It belongs to the SYCE family. Homodimer. Found in a complex with SYCP1 and SYCE2. Interacts with SYCP1, SYCE2 and SYCE3. Interacts with SIX6OS1.

It localises to the nucleus. It is found in the chromosome. Major component of the transverse central element of synaptonemal complexes (SCS), formed between homologous chromosomes during meiotic prophase. Requires SYCP1 in order to be incorporated into the central element. May have a role in the synaptonemal complex assembly, stabilization and recombination. The sequence is that of Synaptonemal complex central element protein 1 (SYCE1) from Bos taurus (Bovine).